The sequence spans 275 residues: NH(3)-dependent NAD(+) synthetase (275 aa).

46–53 (GISGGQDS) is an ATP binding site. Residue Asp52 participates in Mg(2+) binding. Position 140 (Arg140) interacts with deamido-NAD(+). Thr160 serves as a coordination point for ATP. Position 165 (Glu165) interacts with Mg(2+). Residues Lys173 and Asp180 each contribute to the deamido-NAD(+) site. ATP contacts are provided by Lys189 and Thr211. 260-261 (HK) contributes to the deamido-NAD(+) binding site.

Belongs to the NAD synthetase family. Homodimer.

It carries out the reaction deamido-NAD(+) + NH4(+) + ATP = AMP + diphosphate + NAD(+) + H(+). Its pathway is cofactor biosynthesis; NAD(+) biosynthesis; NAD(+) from deamido-NAD(+) (ammonia route): step 1/1. In terms of biological role, catalyzes the ATP-dependent amidation of deamido-NAD to form NAD. Uses ammonia as a nitrogen source. This Shigella boydii serotype 18 (strain CDC 3083-94 / BS512) protein is NH(3)-dependent NAD(+) synthetase.